Here is a 143-residue protein sequence, read N- to C-terminus: Large ribosomal subunit protein uL11 (143 aa).

Belongs to the universal ribosomal protein uL11 family. In terms of assembly, part of the ribosomal stalk of the 50S ribosomal subunit. Interacts with L10 and the large rRNA to form the base of the stalk. L10 forms an elongated spine to which L12 dimers bind in a sequential fashion forming a multimeric L10(L12)X complex. In terms of processing, one or more lysine residues are methylated.

Forms part of the ribosomal stalk which helps the ribosome interact with GTP-bound translation factors. This chain is Large ribosomal subunit protein uL11, found in Ralstonia nicotianae (strain ATCC BAA-1114 / GMI1000) (Ralstonia solanacearum).